The chain runs to 338 residues: Tetraacyldisaccharide 4'-kinase (338 aa).

An ATP-binding site is contributed by 51 to 58; sequence HVGGAGKT.

Belongs to the LpxK family.

The catalysed reaction is a lipid A disaccharide + ATP = a lipid IVA + ADP + H(+). It functions in the pathway glycolipid biosynthesis; lipid IV(A) biosynthesis; lipid IV(A) from (3R)-3-hydroxytetradecanoyl-[acyl-carrier-protein] and UDP-N-acetyl-alpha-D-glucosamine: step 6/6. In terms of biological role, transfers the gamma-phosphate of ATP to the 4'-position of a tetraacyldisaccharide 1-phosphate intermediate (termed DS-1-P) to form tetraacyldisaccharide 1,4'-bis-phosphate (lipid IVA). The chain is Tetraacyldisaccharide 4'-kinase from Bradyrhizobium diazoefficiens (strain JCM 10833 / BCRC 13528 / IAM 13628 / NBRC 14792 / USDA 110).